A 355-amino-acid polypeptide reads, in one-letter code: Anthranilate phosphoribosyltransferase (355 aa).

Residues Gly-102, 105 to 106 (GD), Ser-110, 112 to 115 (NIST), 130 to 138 (KHGNRSVSS), and Ser-142 contribute to the 5-phospho-alpha-D-ribose 1-diphosphate site. Position 102 (Gly-102) interacts with anthranilate. A Mg(2+)-binding site is contributed by Ser-114. Residue Asn-133 participates in anthranilate binding. Arg-188 serves as a coordination point for anthranilate. Mg(2+)-binding residues include Asp-246 and Glu-247.

Belongs to the anthranilate phosphoribosyltransferase family. As to quaternary structure, homodimer. The cofactor is Mg(2+).

It catalyses the reaction N-(5-phospho-beta-D-ribosyl)anthranilate + diphosphate = 5-phospho-alpha-D-ribose 1-diphosphate + anthranilate. It functions in the pathway amino-acid biosynthesis; L-tryptophan biosynthesis; L-tryptophan from chorismate: step 2/5. Its function is as follows. Catalyzes the transfer of the phosphoribosyl group of 5-phosphorylribose-1-pyrophosphate (PRPP) to anthranilate to yield N-(5'-phosphoribosyl)-anthranilate (PRA). This Pectobacterium carotovorum subsp. carotovorum (strain PC1) protein is Anthranilate phosphoribosyltransferase.